Consider the following 181-residue polypeptide: CDP-archaeol synthase (181 aa).

The next 5 helical transmembrane spans lie at V7–A27, L55–V75, L88–L108, L126–E146, and T147–T167.

This sequence belongs to the CDP-archaeol synthase family. Mg(2+) is required as a cofactor.

It is found in the cell membrane. It catalyses the reaction 2,3-bis-O-(geranylgeranyl)-sn-glycerol 1-phosphate + CTP + H(+) = CDP-2,3-bis-O-(geranylgeranyl)-sn-glycerol + diphosphate. The protein operates within membrane lipid metabolism; glycerophospholipid metabolism. In terms of biological role, catalyzes the formation of CDP-2,3-bis-(O-geranylgeranyl)-sn-glycerol (CDP-archaeol) from 2,3-bis-(O-geranylgeranyl)-sn-glycerol 1-phosphate (DGGGP) and CTP. This reaction is the third ether-bond-formation step in the biosynthesis of archaeal membrane lipids. The chain is CDP-archaeol synthase from Haloarcula marismortui (strain ATCC 43049 / DSM 3752 / JCM 8966 / VKM B-1809) (Halobacterium marismortui).